The primary structure comprises 987 residues: Transposase for transposon Tn4430 (987 aa).

Belongs to the transposase 7 family.

Functionally, required for transposition of transposon Tn4430. The polypeptide is Transposase for transposon Tn4430 (tnpA) (Bacillus thuringiensis).